Consider the following 116-residue polypeptide: Iron-sulfur cluster insertion protein ErpA (116 aa).

Iron-sulfur cluster contacts are provided by Cys-44, Cys-108, and Cys-110.

The protein belongs to the HesB/IscA family. In terms of assembly, homodimer. It depends on iron-sulfur cluster as a cofactor.

Required for insertion of 4Fe-4S clusters for at least IspG. The polypeptide is Iron-sulfur cluster insertion protein ErpA (Shewanella sp. (strain ANA-3)).